We begin with the raw amino-acid sequence, 346 residues long: Ribonucleoside-diphosphate reductase subunit beta (346 aa).

Residues Glu-89, Glu-120, and His-123 each contribute to the Fe cation site. Residue Tyr-129 is part of the active site. Fe cation contacts are provided by Glu-193, Glu-227, and His-230.

The protein belongs to the ribonucleoside diphosphate reductase small chain family. As to quaternary structure, tetramer of two alpha and two beta subunits. It depends on Fe cation as a cofactor.

The enzyme catalyses a 2'-deoxyribonucleoside 5'-diphosphate + [thioredoxin]-disulfide + H2O = a ribonucleoside 5'-diphosphate + [thioredoxin]-dithiol. Provides the precursors necessary for DNA synthesis. Catalyzes the biosynthesis of deoxyribonucleotides from the corresponding ribonucleotides. This Chlamydia muridarum (strain MoPn / Nigg) protein is Ribonucleoside-diphosphate reductase subunit beta (nrdB).